A 235-amino-acid chain; its full sequence is Orotidine 5'-phosphate decarboxylase (235 aa).

Residues Asp10, Lys32, 59–68 (DLKLHDIPNT), Thr123, Arg184, Gln193, Gly213, and Arg214 each bind substrate. Lys61 functions as the Proton donor in the catalytic mechanism.

The protein belongs to the OMP decarboxylase family. Type 1 subfamily. As to quaternary structure, homodimer.

It carries out the reaction orotidine 5'-phosphate + H(+) = UMP + CO2. It participates in pyrimidine metabolism; UMP biosynthesis via de novo pathway; UMP from orotate: step 2/2. Catalyzes the decarboxylation of orotidine 5'-monophosphate (OMP) to uridine 5'-monophosphate (UMP). The polypeptide is Orotidine 5'-phosphate decarboxylase (Paramagnetospirillum magneticum (strain ATCC 700264 / AMB-1) (Magnetospirillum magneticum)).